Reading from the N-terminus, the 400-residue chain is Tryptophan synthase beta chain (400 aa).

Lysine 90 is modified (N6-(pyridoxal phosphate)lysine).

Belongs to the TrpB family. Tetramer of two alpha and two beta chains. It depends on pyridoxal 5'-phosphate as a cofactor.

The enzyme catalyses (1S,2R)-1-C-(indol-3-yl)glycerol 3-phosphate + L-serine = D-glyceraldehyde 3-phosphate + L-tryptophan + H2O. Its pathway is amino-acid biosynthesis; L-tryptophan biosynthesis; L-tryptophan from chorismate: step 5/5. Functionally, the beta subunit is responsible for the synthesis of L-tryptophan from indole and L-serine. The sequence is that of Tryptophan synthase beta chain from Bacillus velezensis (strain DSM 23117 / BGSC 10A6 / LMG 26770 / FZB42) (Bacillus amyloliquefaciens subsp. plantarum).